Consider the following 249-residue polypeptide: DNA polymerase sliding clamp 1 (249 aa).

The protein belongs to the PCNA family. Homotrimer. The subunits circularize to form a toroid; DNA passes through its center. Replication factor C (RFC) is required to load the toroid on the DNA.

In terms of biological role, sliding clamp subunit that acts as a moving platform for DNA processing. Responsible for tethering the catalytic subunit of DNA polymerase and other proteins to DNA during high-speed replication. This chain is DNA polymerase sliding clamp 1, found in Pyrobaculum aerophilum (strain ATCC 51768 / DSM 7523 / JCM 9630 / CIP 104966 / NBRC 100827 / IM2).